Here is a 151-residue protein sequence, read N- to C-terminus: Small ribosomal subunit protein uS19 (151 aa).

This sequence belongs to the universal ribosomal protein uS19 family.

This chain is Small ribosomal subunit protein uS19 (RPS15), found in Picea mariana (Black spruce).